We begin with the raw amino-acid sequence, 194 residues long: Xanthine phosphoribosyltransferase (194 aa).

Positions 20 and 27 each coordinate xanthine. Position 128-132 (128-132) interacts with 5-phospho-alpha-D-ribose 1-diphosphate; it reads ANGEA. Lys-156 is a xanthine binding site.

It belongs to the purine/pyrimidine phosphoribosyltransferase family. Xpt subfamily. As to quaternary structure, homodimer.

The protein resides in the cytoplasm. It carries out the reaction XMP + diphosphate = xanthine + 5-phospho-alpha-D-ribose 1-diphosphate. It functions in the pathway purine metabolism; XMP biosynthesis via salvage pathway; XMP from xanthine: step 1/1. Its function is as follows. Converts the preformed base xanthine, a product of nucleic acid breakdown, to xanthosine 5'-monophosphate (XMP), so it can be reused for RNA or DNA synthesis. This Macrococcus caseolyticus (strain JCSC5402) (Macrococcoides caseolyticum) protein is Xanthine phosphoribosyltransferase.